The primary structure comprises 434 residues: GPI mannosyltransferase 2 (434 aa).

Helical transmembrane passes span 22 to 42, 109 to 129, 145 to 165, 170 to 190, 210 to 230, 252 to 272, 311 to 331, 354 to 374, 377 to 397, and 411 to 431; these read LSLA…GCPG, ILSF…SVLA, GALI…GAFL, GESL…SSLL, LFSI…LFAF, LGVI…PQWI, YWTL…FLMC, LAAP…VQII, ISSG…SHVA, and IAIQ…GSFL.

The protein belongs to the PIGV family.

Its subcellular location is the endoplasmic reticulum membrane. The protein operates within glycolipid biosynthesis; glycosylphosphatidylinositol-anchor biosynthesis. Its function is as follows. Mannosyltransferase involved in glycosylphosphatidylinositol-anchor biosynthesis. Transfers the second mannose to the glycosylphosphatidylinositol during GPI precursor assembly. The protein is GPI mannosyltransferase 2 (gpi18) of Aspergillus oryzae (strain ATCC 42149 / RIB 40) (Yellow koji mold).